Reading from the N-terminus, the 244-residue chain is S-adenosyl-L-methionine-dependent Diels-Alderase iliD (244 aa).

Belongs to the class I-like SAM-binding methyltransferase superfamily. Erg6/SMT family. Requires S-adenosyl-L-methionine as cofactor.

It carries out the reaction 3-[(2E,4E,8S,10E,12Z)-4,8-dimethyltetradeca-2,4,10,12-tetraenoyl]-4-hydroxy-5-(4-hydroxyphenyl)-1,2-dihydropyridin-2-one = ilicicolin H. It participates in mycotoxin biosynthesis. S-adenosyl-l-methionine-dependent Diels-Alderase; part of the gene cluster that mediates the biosynthesis of ilicicolin H, a 4-hydroxy-2-pyridonealkaloid that has potent and broad antifungal activities by inhibiting the mitochondrial respiration chain. IliD catalyzes the Diels-Alder reaction that converts the acyclic 2-pyridone intermediate to 8-epi-ilicicolin H. The biosynthesis of ilicicolin H starts with formation of the tetramic acid by the hybrid PKS-NRPS synthetase iliA with the partnering trans-enoyl reductase iliB since iliA lacks a designated enoylreductase (ER) domain. The cytochrome P450 monooxygenase iliC then catalyzes the ring expansion of the tetramate to the acyclic 2-pyridone. The pericyclase iliD further converts the acyclic 2-pyridone into 8-epi-ilicicolin H. 8-epi-ilicicolin H might then spontaneously convert to ilicicolin H since ilicicolin H is produced in the absence of the epimerase iliE, in contrast to what was observed for the Talaromyces variabilis ilicolin H biosynthetic pathway. The chain is S-adenosyl-L-methionine-dependent Diels-Alderase iliD from Neonectria sp. (strain DH2).